We begin with the raw amino-acid sequence, 284 residues long: Homeobox-leucine zipper protein HAT4 (284 aa).

Positions 48 to 59 are enriched in polar residues; the sequence is ESFTSSVPNSDS. Positions 48–132 are disordered; it reads ESFTSSVPNS…DGDNSRKKLR (85 aa). Residues 89–100 show a composition bias toward low complexity; sequence VSSPNSTVSSST. The homeobox DNA-binding region spans 126–185; the sequence is NSRKKLRLSKDQSAILEETFKDHSTLNPKQKQALAKQLGLRARQVEVWFQNRRARTKLKQ. A leucine-zipper region spans residues 193–214; that stretch reads LRRCCENLTEENRRLQKEVTEL.

Belongs to the HD-ZIP homeobox family. Class II subfamily. As to quaternary structure, interacts with DNA as homodimer. As to expression, predominantly expressed in leaves and stems.

Its subcellular location is the nucleus. In terms of biological role, probable transcription factor involved in the negative regulation of cell elongation and specific cell proliferation processes such as lateral root formation and secondary growth of the vascular system. Acts as a mediator of the red/far-red light effects on leaf cell expansion in the shading response. Binds to the DNA sequence 5'-CAAT[GC]ATTG-3'. Negatively regulates its own expression. This chain is Homeobox-leucine zipper protein HAT4 (HAT4), found in Arabidopsis thaliana (Mouse-ear cress).